The primary structure comprises 134 residues: Ribosome-binding factor A (134 aa).

This sequence belongs to the RbfA family. In terms of assembly, monomer. Binds 30S ribosomal subunits, but not 50S ribosomal subunits or 70S ribosomes.

The protein resides in the cytoplasm. One of several proteins that assist in the late maturation steps of the functional core of the 30S ribosomal subunit. Associates with free 30S ribosomal subunits (but not with 30S subunits that are part of 70S ribosomes or polysomes). Required for efficient processing of 16S rRNA. May interact with the 5'-terminal helix region of 16S rRNA. This is Ribosome-binding factor A from Baumannia cicadellinicola subsp. Homalodisca coagulata.